The sequence spans 170 residues: Bifunctional protein PyrR (170 aa).

Positions 90-102 match the PRPP-binding motif; sequence LVLIDDVLMSGRT.

The protein belongs to the purine/pyrimidine phosphoribosyltransferase family. PyrR subfamily.

It catalyses the reaction UMP + diphosphate = 5-phospho-alpha-D-ribose 1-diphosphate + uracil. Regulates the transcription of the pyrimidine nucleotide (pyr) operon in response to exogenous pyrimidines. Its function is as follows. Also displays a weak uracil phosphoribosyltransferase activity which is not physiologically significant. The sequence is that of Bifunctional protein PyrR from Pseudomonas syringae pv. syringae (strain B728a).